The following is a 492-amino-acid chain: UDP-N-acetylmuramate--L-alanine ligase (492 aa).

126 to 132 (GTHGKTT) contacts ATP.

It belongs to the MurCDEF family.

The protein localises to the cytoplasm. The catalysed reaction is UDP-N-acetyl-alpha-D-muramate + L-alanine + ATP = UDP-N-acetyl-alpha-D-muramoyl-L-alanine + ADP + phosphate + H(+). The protein operates within cell wall biogenesis; peptidoglycan biosynthesis. Cell wall formation. The polypeptide is UDP-N-acetylmuramate--L-alanine ligase (Serratia proteamaculans (strain 568)).